The primary structure comprises 188 residues: Peptidyl-tRNA hydrolase (188 aa).

Tyr-14 contacts tRNA. His-19 serves as the catalytic Proton acceptor. The tRNA site is built by Tyr-64, Asn-66, and Asn-112.

Belongs to the PTH family. As to quaternary structure, monomer.

The protein localises to the cytoplasm. It carries out the reaction an N-acyl-L-alpha-aminoacyl-tRNA + H2O = an N-acyl-L-amino acid + a tRNA + H(+). Its function is as follows. Hydrolyzes ribosome-free peptidyl-tRNAs (with 1 or more amino acids incorporated), which drop off the ribosome during protein synthesis, or as a result of ribosome stalling. In terms of biological role, catalyzes the release of premature peptidyl moieties from peptidyl-tRNA molecules trapped in stalled 50S ribosomal subunits, and thus maintains levels of free tRNAs and 50S ribosomes. This is Peptidyl-tRNA hydrolase from Clostridium tetani (strain Massachusetts / E88).